The primary structure comprises 183 residues: Inner membrane-spanning protein YciB (183 aa).

5 helical membrane-spanning segments follow: residues 10 to 30, 50 to 70, 72 to 92, 118 to 138, and 148 to 168; these read LVIFFAVYKLFDIYAASGALI, MHLITFVMVTVFGTLTLVFHD, AFIKWKVTVVYALFAIALAVS, VTWYWVSFFITCALVNIYVAF, and FKVFGLTALTLVNTVITVIYL.

The protein belongs to the YciB family.

Its subcellular location is the cell inner membrane. Its function is as follows. Plays a role in cell envelope biogenesis, maintenance of cell envelope integrity and membrane homeostasis. This is Inner membrane-spanning protein YciB from Shewanella sediminis (strain HAW-EB3).